Here is a 325-residue protein sequence, read N- to C-terminus: Hydroxymethylglutaryl-CoA lyase, mitochondrial (325 aa).

The transit peptide at 1 to 27 directs the protein to the mitochondrion; it reads MAAMTKALPRRLVGLASLRAVSTSSMD. The Pyruvate carboxyltransferase domain maps to 33–300; that stretch reads VKIVEVGPRD…HTGVNLQKLL (268 aa). Substrate is bound at residue arginine 41. Aspartate 42 is a binding site for a divalent metal cation. Residue lysine 48 is modified to N6-acetyllysine; alternate. Lysine 48 is subject to N6-succinyllysine; alternate. Position 111 is an N6-acetyllysine (lysine 111). Residues lysine 137 and lysine 179 each carry the N6-acetyllysine; alternate modification. N6-succinyllysine; alternate occurs at positions 137 and 179. A divalent metal cation is bound by residues histidine 233 and histidine 235. The active site involves cysteine 266. Asparagine 275 contacts a divalent metal cation. The Microbody targeting signal signature appears at 323–325; the sequence is CKL. Lysine 324 is subject to N6-acetyllysine.

Belongs to the HMG-CoA lyase family. Homodimer; disulfide-linked. Can also form homotetramers.

Its subcellular location is the mitochondrion matrix. It is found in the peroxisome. The enzyme catalyses (3S)-3-hydroxy-3-methylglutaryl-CoA = acetoacetate + acetyl-CoA. Its pathway is metabolic intermediate metabolism; (S)-3-hydroxy-3-methylglutaryl-CoA degradation; acetoacetate from (S)-3-hydroxy-3-methylglutaryl-CoA: step 1/1. Mitochondrial 3-hydroxy-3-methylglutaryl-CoA lyase that catalyzes a cation-dependent cleavage of (S)-3-hydroxy-3-methylglutaryl-CoA into acetyl-CoA and acetoacetate, a key step in ketogenesis. Terminal step in leucine catabolism. Ketone bodies (beta-hydroxybutyrate, acetoacetate and acetone) are essential as an alternative source of energy to glucose, as lipid precursors and as regulators of metabolism. This Macaca fascicularis (Crab-eating macaque) protein is Hydroxymethylglutaryl-CoA lyase, mitochondrial (HMGCL).